Here is a 188-residue protein sequence, read N- to C-terminus: Protein CRIPTO3 (188 aa).

The 30-residue stretch at 78-107 folds into the EGF-like domain; that stretch reads LNRTCCLNGGTCMLESFCACPPSFYGRNCE. An N-linked (GlcNAc...) asparagine glycan is attached at asparagine 79. 6 cysteine pairs are disulfide-bonded: cysteine 82–cysteine 89, cysteine 83–cysteine 95, cysteine 97–cysteine 106, cysteine 115–cysteine 133, cysteine 128–cysteine 149, and cysteine 131–cysteine 140.

It belongs to the EGF-CFC (Cripto-1/FRL1/Cryptic) family. In terms of tissue distribution, expressed weakly in lung, colon and breast. Expressed also strongly in primary cancer tissues; lung and colon cancers.

Its subcellular location is the cell membrane. Its function is as follows. Could play a role in the determination of the epiblastic cells that subsequently give rise to the mesoderm. Activates the Nodal-dependent signaling pathway. The polypeptide is Protein CRIPTO3 (Homo sapiens (Human)).